An 892-amino-acid chain; its full sequence is Alanine--tRNA ligase (892 aa).

Residues His565, His569, Cys675, and His679 each coordinate Zn(2+). The interval Met852 to Ala871 is disordered.

It belongs to the class-II aminoacyl-tRNA synthetase family. Zn(2+) serves as cofactor.

It localises to the cytoplasm. It catalyses the reaction tRNA(Ala) + L-alanine + ATP = L-alanyl-tRNA(Ala) + AMP + diphosphate. Catalyzes the attachment of alanine to tRNA(Ala) in a two-step reaction: alanine is first activated by ATP to form Ala-AMP and then transferred to the acceptor end of tRNA(Ala). Also edits incorrectly charged Ser-tRNA(Ala) and Gly-tRNA(Ala) via its editing domain. The sequence is that of Alanine--tRNA ligase from Parvibaculum lavamentivorans (strain DS-1 / DSM 13023 / NCIMB 13966).